The primary structure comprises 140 residues: Transcription antitermination protein NusB (140 aa).

The protein belongs to the NusB family.

Its function is as follows. Involved in transcription antitermination. Required for transcription of ribosomal RNA (rRNA) genes. Binds specifically to the boxA antiterminator sequence of the ribosomal RNA (rrn) operons. The chain is Transcription antitermination protein NusB from Streptococcus pneumoniae (strain 70585).